Here is a 53-residue protein sequence, read N- to C-terminus: Sec-independent protein translocase protein TatA (53 aa).

Residues 1-21 form a helical membrane-spanning segment; it reads MGMSVSHLLIVLLIIFVLFGA.

The protein belongs to the TatA/E family. As to quaternary structure, the Tat system comprises two distinct complexes: a TatABC complex, containing multiple copies of TatA, TatB and TatC subunits, and a separate TatA complex, containing only TatA subunits. Substrates initially bind to the TatABC complex, which probably triggers association of the separate TatA complex to form the active translocon.

The protein localises to the cell inner membrane. Its function is as follows. Part of the twin-arginine translocation (Tat) system that transports large folded proteins containing a characteristic twin-arginine motif in their signal peptide across membranes. TatA could form the protein-conducting channel of the Tat system. This is Sec-independent protein translocase protein TatA from Rickettsia massiliae (strain Mtu5).